Here is a 596-residue protein sequence, read N- to C-terminus: NADH-quinone oxidoreductase subunit C/D (596 aa).

Residues 1 to 186 (MTDLTAQEPA…SPFELTKAKQ (186 aa)) form an NADH dehydrogenase I subunit C region. Positions 210-596 (DFMFLNLGPN…IDFVMSDVDR (387 aa)) are NADH dehydrogenase I subunit D.

The protein in the N-terminal section; belongs to the complex I 30 kDa subunit family. In the C-terminal section; belongs to the complex I 49 kDa subunit family. In terms of assembly, NDH-1 is composed of 13 different subunits. Subunits NuoB, CD, E, F, and G constitute the peripheral sector of the complex.

It localises to the cell inner membrane. It catalyses the reaction a quinone + NADH + 5 H(+)(in) = a quinol + NAD(+) + 4 H(+)(out). Its function is as follows. NDH-1 shuttles electrons from NADH, via FMN and iron-sulfur (Fe-S) centers, to quinones in the respiratory chain. The immediate electron acceptor for the enzyme in this species is believed to be ubiquinone. Couples the redox reaction to proton translocation (for every two electrons transferred, four hydrogen ions are translocated across the cytoplasmic membrane), and thus conserves the redox energy in a proton gradient. This is NADH-quinone oxidoreductase subunit C/D from Shigella flexneri serotype 5b (strain 8401).